Reading from the N-terminus, the 637-residue chain is Chaperone protein HtpG (637 aa).

Residues 1-335 are a; substrate-binding; it reads MQGTVNSERL…SSDLPLNISR (335 aa). The segment at 336-559 is b; it reads ETLQNNKIIE…DGSMDIRMER (224 aa). The segment at 560 to 637 is c; that stretch reads FLREQKQLNY…RMNSVLSQIN (78 aa).

Belongs to the heat shock protein 90 family. As to quaternary structure, homodimer.

It is found in the cytoplasm. Its function is as follows. Molecular chaperone. Has ATPase activity. The chain is Chaperone protein HtpG from Ehrlichia ruminantium (strain Gardel).